Consider the following 251-residue polypeptide: Sec-independent protein translocase protein TatC (251 aa).

6 helical membrane-spanning segments follow: residues 23–43, 73–93, 104–124, 159–179, 197–217, and 218–238; these read AFII…SFLL, SAFT…YLFI, IIAF…IFVF, LVIH…VIIV, IAVV…ILSQ, and FALA…CNFI.

The protein belongs to the TatC family. In terms of assembly, the Tat system comprises two distinct complexes: a TatABC complex, containing multiple copies of TatA, TatB and TatC subunits, and a separate TatA complex, containing only TatA subunits. Substrates initially bind to the TatABC complex, which probably triggers association of the separate TatA complex to form the active translocon.

It is found in the cell inner membrane. Its function is as follows. Part of the twin-arginine translocation (Tat) system that transports large folded proteins containing a characteristic twin-arginine motif in their signal peptide across membranes. Together with TatB, TatC is part of a receptor directly interacting with Tat signal peptides. The chain is Sec-independent protein translocase protein TatC from Rickettsia prowazekii (strain Madrid E).